The sequence spans 496 residues: Ankyrin repeat domain-containing protein 53 (496 aa).

Residues 1-15 (MASAGSTARRAGSGS) are compositionally biased toward low complexity. The tract at residues 1–66 (MASAGSTARR…RPSEESDQTT (66 aa)) is disordered. Residues 51 to 60 (AESKQPRPSE) are compositionally biased toward basic and acidic residues. ANK repeat units follow at residues 105–135 (KGFTAIHFAAQRGKLACLQVLVEEYKFPVNL), 139–172 (NSQTPLHLVIHKDNTTVALPCIYYLLEKGAALNA), and 176–205 (NGCTPLHLAVREGLLDCVKVLVQSGANVHA). The disordered stretch occupies residues 292–320 (LVSNTKQARATALSKTPEQRGSQCSSSFH).

Interacts with PSRC1; recruited by PSRC1 to the spindle during mitosis. Post-translationally, phosphorylated during mitosis.

It is found in the cytoplasm. The protein resides in the cytoskeleton. The protein localises to the spindle. Its subcellular location is the spindle pole. In terms of biological role, required for normal progression through mitosis. Involved in chromosome alignment and cytokinesis via regulation of microtubules polymerization. This Macaca fascicularis (Crab-eating macaque) protein is Ankyrin repeat domain-containing protein 53 (ANKRD53).